The primary structure comprises 398 residues: RNA-binding protein rnc1 (398 aa).

The tract at residues 40 to 78 is disordered; that stretch reads KVSIPTPKPSTPLSTLTNGSTIQQSMTNQPEPTSQVPPI. Thr-50 is modified (phosphothreonine). The segment covering 57–76 has biased composition (polar residues); it reads NGSTIQQSMTNQPEPTSQVP. KH domains follow at residues 93-157 and 178-243; these read QLTL…YRFI and PRKL…IWEI. Residues 274–290 are compositionally biased toward low complexity; the sequence is ASTASPQQVSPPAAPST. The segment at 274–295 is disordered; the sequence is ASTASPQQVSPPAAPSTTSGEA. Residues 320–385 form the KH 3 domain; it reads KVTQNISIPA…EENEKALFLL (66 aa).

Post-translationally, phosphorylated by pmk1. Phosphorylation causes enhancement of the RNA-binding activity.

It is found in the cytoplasm. Functionally, binds and stabilizes pmp1 mRNA and hence acts as a negative regulator of pmk1 signaling. Overexpression suppresses the Cl(-) sensitivity of calcineurin deletion. This Schizosaccharomyces pombe (strain 972 / ATCC 24843) (Fission yeast) protein is RNA-binding protein rnc1.